Reading from the N-terminus, the 429-residue chain is Alpha-galactosidase A (429 aa).

The first 31 residues, 1–31, serve as a signal peptide directing secretion; that stretch reads MQLRNPELHLGCALALRFLALVSWDIPGARA. 2 disulfide bridges follow: cysteine 52–cysteine 94 and cysteine 56–cysteine 63. A glycan (N-linked (GlcNAc...) asparagine) is linked at asparagine 139. Cysteine 142 and cysteine 172 are joined by a disulfide. Aspartate 170 (nucleophile) is an active-site residue. Asparagine 192 carries an N-linked (GlcNAc...) asparagine glycan. A disulfide bridge connects residues cysteine 202 and cysteine 223. Residue 203–207 participates in substrate binding; sequence EWPLY. Asparagine 215 carries N-linked (GlcNAc...) asparagine glycosylation. Aspartate 231 serves as the catalytic Proton donor. Cysteine 378 and cysteine 382 are disulfide-bonded.

Belongs to the glycosyl hydrolase 27 family. As to quaternary structure, homodimer.

Its subcellular location is the lysosome. It carries out the reaction Hydrolysis of terminal, non-reducing alpha-D-galactose residues in alpha-D-galactosides, including galactose oligosaccharides, galactomannans and galactolipids.. It catalyses the reaction a globoside Gb3Cer (d18:1(4E)) + H2O = a beta-D-Gal-(1-&gt;4)-beta-D-Glc-(1&lt;-&gt;1)-Cer(d18:1(4E)) + D-galactose. The catalysed reaction is a globoside Gb3Cer + H2O = a beta-D-galactosyl-(1-&gt;4)-beta-D-glucosyl-(1&lt;-&gt;1)-ceramide + D-galactose. Galactosylgalactosylglucosylceramidase activity is stimulated by saposin B and ammonium chloride. Functionally, catalyzes the hydrolysis of glycosphingolipids and participates in their degradation in the lysosome. In Homo sapiens (Human), this protein is Alpha-galactosidase A.